Reading from the N-terminus, the 529-residue chain is DNA polymerase lambda (529 aa).

The 96-residue stretch at 14–109 (DPEGMFAGMV…EKANEDLYVL (96 aa)) folds into the BRCT domain. The interval 119–199 (PKKSLPAISG…ESTSVYKPPD (81 aa)) is disordered. The segment covering 153-175 (SHSNTQGSPDSPTSCSVPSTSAS) has biased composition (polar residues). The segment covering 182 to 193 (ETPTSPQSESTS) has biased composition (low complexity). The tract at residues 213 to 227 (NIYRALGEDRRSFSY) is DNA-binding. The active site involves His260. Residues 295 to 298 (GPAT) form a DNA-binding region. Residues Arg336, 367 to 370 (SYRR), and 376 to 379 (GDLD) each bind dCTP. The segment at 370–379 (RGKATCGDLD) is involved in primer binding. Positions 377, 379, and 444 each coordinate Mn(2+). Residues 418 to 459 (EEGTDSGVDTYFGLCTYPGQELRRRIDFKVYPRDIYSFGLIA) are DNA-binding. Asn467 contacts dCTP.

This sequence belongs to the DNA polymerase type-X family. Interacts with the DNA repair proteins XRCC4 and LIG4. Interacts with HSP90-1. Mn(2+) serves as cofactor.

The protein localises to the nucleus. The catalysed reaction is DNA(n) + a 2'-deoxyribonucleoside 5'-triphosphate = DNA(n+1) + diphosphate. Its function is as follows. Repair polymerase involved in base excision repair (BER) and responsible for repair of lesions that give rise to abasic (AP) sites in DNA. Has both DNA polymerase and terminal transferase activities. Has a 5'-deoxyribose-5-phosphate lyase (dRP lyase) activity. Involved in the repair of transposon-induced DNA double strand breaks (DSBs). Involved in repair of UV-B-mediated DNA damage during seedling development through an excision repair mechanism. Involved the repair of DSBs induced by high salinity and DNA cross-linking agent. Functions via the DNA non-homologous end joining (NHEJ) pathway. The protein is DNA polymerase lambda of Arabidopsis thaliana (Mouse-ear cress).